A 312-amino-acid polypeptide reads, in one-letter code: Salivary protein SG34 (312 aa).

The N-terminal stretch at 1 to 20 (MSPSKKILVLLLFPILLVSS) is a signal peptide. The stretch at 95 to 158 (NMEVQLLRES…QEEIEEQTKQ (64 aa)) forms a coiled coil.

Belongs to the salivary protein SG34 family. Female salivary gland (at protein level). Low-level expression in ovary.

In terms of biological role, possible serine protease. Its function is as follows. (Microbial infection) Modulates replication of duck Tembusu virus in salivary glands and virus release into the saliva, probably via the regulation of antimicrobial peptides expression in response to virus infection. Functionally, (Microbial infection) Enhances replication of dengue virus type 2 in human keratinocytes, probably by suppressing the production of type I interferons and antimicrobial peptides in response to virus infection. This is Salivary protein SG34 from Aedes aegypti (Yellowfever mosquito).